The following is a 948-amino-acid chain: Phosphoenolpyruvate carboxylase (948 aa).

Active-site residues include H138 and K610.

This sequence belongs to the PEPCase type 1 family. Requires Mg(2+) as cofactor.

The enzyme catalyses oxaloacetate + phosphate = phosphoenolpyruvate + hydrogencarbonate. In terms of biological role, forms oxaloacetate, a four-carbon dicarboxylic acid source for the tricarboxylic acid cycle. This is Phosphoenolpyruvate carboxylase from Streptococcus gordonii (strain Challis / ATCC 35105 / BCRC 15272 / CH1 / DL1 / V288).